We begin with the raw amino-acid sequence, 276 residues long: D-aminoacyl-tRNA deacylase (276 aa).

The protein belongs to the DtdA deacylase family. As to quaternary structure, monomer. Zn(2+) is required as a cofactor.

It carries out the reaction a D-aminoacyl-tRNA + H2O = a tRNA + a D-alpha-amino acid + H(+). The catalysed reaction is glycyl-tRNA(Ala) + H2O = tRNA(Ala) + glycine + H(+). In terms of biological role, D-aminoacyl-tRNA deacylase with broad substrate specificity. By recycling D-aminoacyl-tRNA to D-amino acids and free tRNA molecules, this enzyme counteracts the toxicity associated with the formation of D-aminoacyl-tRNA entities in vivo. This is D-aminoacyl-tRNA deacylase from Staphylothermus marinus (strain ATCC 43588 / DSM 3639 / JCM 9404 / F1).